A 58-amino-acid polypeptide reads, in one-letter code: Leucine zipper protein 6 (58 aa).

In terms of tissue distribution, widely expressed, highest levels found in brain, placenta, spleen, testis, and ovary. Up-regulated in some tumor cells.

The polypeptide is Leucine zipper protein 6 (LUZP6) (Homo sapiens (Human)).